Consider the following 176-residue polypeptide: ATP synthase subunit delta (176 aa).

The protein belongs to the ATPase delta chain family. In terms of assembly, F-type ATPases have 2 components, F(1) - the catalytic core - and F(0) - the membrane proton channel. F(1) has five subunits: alpha(3), beta(3), gamma(1), delta(1), epsilon(1). F(0) has three main subunits: a(1), b(2) and c(10-14). The alpha and beta chains form an alternating ring which encloses part of the gamma chain. F(1) is attached to F(0) by a central stalk formed by the gamma and epsilon chains, while a peripheral stalk is formed by the delta and b chains.

It localises to the cell inner membrane. F(1)F(0) ATP synthase produces ATP from ADP in the presence of a proton or sodium gradient. F-type ATPases consist of two structural domains, F(1) containing the extramembraneous catalytic core and F(0) containing the membrane proton channel, linked together by a central stalk and a peripheral stalk. During catalysis, ATP synthesis in the catalytic domain of F(1) is coupled via a rotary mechanism of the central stalk subunits to proton translocation. Functionally, this protein is part of the stalk that links CF(0) to CF(1). It either transmits conformational changes from CF(0) to CF(1) or is implicated in proton conduction. This Aliarcobacter butzleri (strain RM4018) (Arcobacter butzleri) protein is ATP synthase subunit delta.